A 246-amino-acid polypeptide reads, in one-letter code: MRYKIVIEYDGSNFIGWQKQNHNSNSIQEILEKAIFKFSKQHVTVYGAGRTDAGVHALGQVAHFDLTTDFETYIVRNAINYHLISHAIAVVHVEKTDTDFHARFSAKRRYYLYKIVNRYSPLTIDRNRAWLVHTPLNVENMIKAVCYIKGNHNFSSFRAKCCQSKSPVKTVDNLSITYNHPYIDINISAISFLHHQVRIIVGTLVECGKGYFPPEHIKTIMEANNRSYAGTTAPSYGLYFVKVDYS.

Catalysis depends on aspartate 52, which acts as the Nucleophile. Position 111 (tyrosine 111) interacts with substrate.

It belongs to the tRNA pseudouridine synthase TruA family. As to quaternary structure, homodimer.

The catalysed reaction is uridine(38/39/40) in tRNA = pseudouridine(38/39/40) in tRNA. Its function is as follows. Formation of pseudouridine at positions 38, 39 and 40 in the anticodon stem and loop of transfer RNAs. This is tRNA pseudouridine synthase A from Ehrlichia ruminantium (strain Gardel).